Consider the following 231-residue polypeptide: High-affinity zinc uptake system ATP-binding protein ZnuC (231 aa).

An ABC transporter domain is found at 4 to 230 (VSLKDIVFGY…CLTWNSCDEL (227 aa)).

The protein belongs to the ABC transporter superfamily. The complex is composed of two ATP-binding proteins (ZnuC), two transmembrane proteins (ZnuB) and a solute-binding protein (ZnuA).

The protein localises to the cell membrane. The catalysed reaction is Zn(2+)(out) + ATP(in) + H2O(in) = Zn(2+)(in) + ADP(in) + phosphate(in) + H(+)(in). Its function is as follows. Part of the high-affinity ABC transporter complex ZnuABC involved in zinc import. Responsible for energy coupling to the transport system. ZnuABC-mediated zinc transport is required for comF expression and competence development. In Bacillus subtilis (strain 168), this protein is High-affinity zinc uptake system ATP-binding protein ZnuC (znuC).